We begin with the raw amino-acid sequence, 627 residues long: (-)-beta-pinene synthase 2, chloroplastic (627 aa).

A chloroplast-targeting transit peptide spans 1–51; it reads MDLISVLPSASKSCVCLHKPLSSSTHKLKPFCRKIRILGMPRPRKSVLMVS. Residues aspartate 378, aspartate 382, and aspartate 530 each coordinate Mg(2+). The short motif at 378-382 is the DDXXD motif element; the sequence is DDMYD.

Belongs to the terpene synthase family. Tpsd subfamily. Mg(2+) is required as a cofactor. Mn(2+) serves as cofactor.

It is found in the plastid. It localises to the chloroplast. It carries out the reaction (2E)-geranyl diphosphate = (1S,5S)-beta-pinene + diphosphate. It catalyses the reaction (2E)-geranyl diphosphate = (1S,5S)-alpha-pinene + diphosphate. It functions in the pathway terpene metabolism; oleoresin biosynthesis. The protein operates within secondary metabolite biosynthesis; terpenoid biosynthesis. Monoterpene synthase (TPS) involved in the biosynthesis of monoterpene natural products included in conifer oleoresin secretions and volatile emissions; these compounds contribute to biotic and abiotic stress defense against herbivores and pathogens. Catalyzes the conversion of (2E)-geranyl diphosphate (GPP) to (-)-beta-pinene and, to a lower extent, to (-)-alpha-pinene. The sequence is that of (-)-beta-pinene synthase 2, chloroplastic from Pinus banksiana (Jack pine).